The primary structure comprises 690 residues: Iron-sulfur clusters transporter ATM1, mitochondrial (690 aa).

The N-terminal 26 residues, 1–26 (MLLLPRCPVIGRIVRSKFRSGLIRNH), are a transit peptide targeting the mitochondrion. Topologically, residues 27–110 (SPVIFTVSKL…PKGNNKVRIR (84 aa)) are mitochondrial matrix. The helical transmembrane segment at 111 to 132 (VLIALGLLISAKILNVQVPFFF) threads the bilayer. Positions 111–401 (VLIALGLLIS…LGSVYRDLKQ (291 aa)) constitute an ABC transmembrane type-1 domain. Residues 133-155 (KQTIDSMNIAWDDPTVALPAAIG) are Mitochondrial intermembrane-facing. The helical transmembrane segment at 156-179 (LTILCYGVARFGSVLFGELRNAVF) threads the bilayer. The Mitochondrial matrix portion of the chain corresponds to 180–228 (AKVAQNAIRTVSLQTFQHLMKLDLGWHLSRQTGGLTRAMDRGTKGISQV). Residues 229 to 252 (LTAMVFHIIPISFEISVVCGILTY) traverse the membrane as a helical segment. Glutamine 253 is a topological domain (mitochondrial intermembrane). Residues 254–274 (FGASFAAITFSTMLLYSIFTI) form a helical membrane-spanning segment. Residues 275-340 (KTTAWRTHFR…SQIKVSQSLA (66 aa)) lie on the Mitochondrial matrix side of the membrane. Glutathione is bound by residues 280 to 284 (RTHFR) and 343 to 346 (NSGQ). Residues 341-359 (FLNSGQNLIFTTALTAMMY) form a helical membrane-spanning segment. The Mitochondrial intermembrane portion of the chain corresponds to 360 to 374 (MGCTGVIGGNLTVGD). Residues 375–396 (LVLINQLVFQLSVPLNFLGSVY) traverse the membrane as a helical segment. Position 393 (glycine 393) interacts with glutathione. The Mitochondrial matrix portion of the chain corresponds to 397–690 (RDLKQSLIDM…ENELKDQQEL (294 aa)). The ABC transporter domain occupies 436 to 672 (ITFENVTFGY…PGSLYRELWT (237 aa)). Residues tyrosine 445 and 469–480 (GSSGSGKSTILK) contribute to the ATP site.

Belongs to the ABC transporter superfamily. ABCB family. Heavy Metal importer (TC 3.A.1.210) subfamily. As to quaternary structure, homodimer.

The protein resides in the mitochondrion inner membrane. Performs an essential function in the generation of cytoplasmic iron-sulfur proteins by mediating the ATP-dependent export of Fe/S cluster precursors synthesized by NFS1 and other mitochondrial proteins. Hydrolyzes ATP. Binds glutathione and may function by transporting a glutathione-conjugated iron-sulfur compound. The sequence is that of Iron-sulfur clusters transporter ATM1, mitochondrial from Saccharomyces cerevisiae (strain ATCC 204508 / S288c) (Baker's yeast).